Consider the following 140-residue polypeptide: Austinoid biosynthesis clusters protein S (140 aa).

This sequence belongs to the trt14 isomerase family. In terms of assembly, homodimer.

It participates in secondary metabolite biosynthesis; terpenoid biosynthesis. In terms of biological role, part of the gene cluster B that mediates the biosynthesis of austinol and dehydroaustinol, two fungal meroterpenoids. The first step of the pathway is the synthesis of 3,5-dimethylorsellinic acid by the polyketide synthase ausA. 3,5-dimethylorsellinic acid is then prenylated by the polyprenyl transferase ausN. Further epoxidation by the FAD-dependent monooxygenase ausM and cyclization by the probable terpene cyclase ausL lead to the formation of protoaustinoid A. Protoaustinoid A is then oxidized to spiro-lactone preaustinoid A3 by the combined action of the FAD-binding monooxygenases ausB and ausC, and the dioxygenase ausE. Acid-catalyzed keto-rearrangement and ring contraction of the tetraketide portion of preaustinoid A3 by ausJ lead to the formation of preaustinoid A4. The aldo-keto reductase ausK, with the help of ausH, is involved in the next step by transforming preaustinoid A4 into isoaustinone which is in turn hydroxylated by the P450 monooxygenase ausI to form austinolide. Finally, the cytochrome P450 monooxygenase ausG modifies austinolide to austinol. Austinol can be further modified to dehydroaustinol which forms a diffusible complex with diorcinol that initiates conidiation. Due to genetic rearrangements of the clusters and the subsequent loss of some enzymes, the end products of the Emericella nidulans austinoid biosynthesis clusters are austinol and dehydroaustinol, even if additional enzymes, such as the O-acetyltransferase ausQ and the cytochrome P450 monooxygenase ausR are still functional. AusS is necessary for austinoids production and may play a possible function as a regulator. The protein is Austinoid biosynthesis clusters protein S of Emericella nidulans (strain FGSC A4 / ATCC 38163 / CBS 112.46 / NRRL 194 / M139) (Aspergillus nidulans).